The sequence spans 572 residues: Probable D-xylulose kinase A (572 aa).

H95, R166, D282, and N283 together coordinate substrate. ATP is bound by residues W365, G470–G471, and N474.

This sequence belongs to the FGGY kinase family.

The protein localises to the cytoplasm. The enzyme catalyses D-xylulose + ATP = D-xylulose 5-phosphate + ADP + H(+). In terms of biological role, highly specific D-xylulose kinase which participates in the catabolism of xylose. Xylose is a major component of hemicelluloses such as xylan. Most fungi utilize D-xylose via three enzymatic reactions, xylose reductase (XR), xylitol dehydrogenase (XDH), and xylulokinase, to form xylulose 5-phosphate, which enters pentose phosphate pathway. The protein is Probable D-xylulose kinase A (xkiA) of Aspergillus oryzae (strain ATCC 42149 / RIB 40) (Yellow koji mold).